A 333-amino-acid polypeptide reads, in one-letter code: Ribosomal RNA small subunit methyltransferase H (333 aa).

S-adenosyl-L-methionine-binding positions include 42–44 (GGH), D62, F86, D105, and Q112.

This sequence belongs to the methyltransferase superfamily. RsmH family.

Its subcellular location is the cytoplasm. It catalyses the reaction cytidine(1402) in 16S rRNA + S-adenosyl-L-methionine = N(4)-methylcytidine(1402) in 16S rRNA + S-adenosyl-L-homocysteine + H(+). In terms of biological role, specifically methylates the N4 position of cytidine in position 1402 (C1402) of 16S rRNA. In Cupriavidus necator (strain ATCC 17699 / DSM 428 / KCTC 22496 / NCIMB 10442 / H16 / Stanier 337) (Ralstonia eutropha), this protein is Ribosomal RNA small subunit methyltransferase H.